Here is a 75-residue protein sequence, read N- to C-terminus: Large ribosomal subunit protein bL31 (75 aa).

It belongs to the bacterial ribosomal protein bL31 family. Type A subfamily. In terms of assembly, part of the 50S ribosomal subunit.

Binds the 23S rRNA. This chain is Large ribosomal subunit protein bL31, found in Chlorobium limicola (strain DSM 245 / NBRC 103803 / 6330).